The primary structure comprises 586 residues: Kelch-like protein 7 (586 aa).

The 68-residue stretch at 44–111 (CDVILMVQER…AYTARISVNS (68 aa)) folds into the BTB domain. The BACK domain occupies 146 to 248 (CLGISVLAEC…SKNFLSKTVQ (103 aa)). Kelch repeat units follow at residues 294 to 336 (RIAL…FWDN), 337 to 382 (VVYI…AAEG), 383 to 430 (KIYT…EANG), 431 to 481 (LIYV…FVKD), 483 to 528 (IFAV…AVGS), and 530 to 575 (VYVL…CVVD).

As to quaternary structure, homodimer. Component of the BCR(KLHL7) E3 ubiquitin ligase complex, at least composed of CUL3 and KLHL7 and RBX1. As to expression, widely expressed, with highest levels in adult and fetal heart, CNS and adult testis.

The protein localises to the nucleus. Its subcellular location is the cytoplasm. It participates in protein modification; protein ubiquitination. Functionally, substrate-specific adapter of a BCR (BTB-CUL3-RBX1) E3 ubiquitin ligase complex. The BCR(KLHL7) complex acts by mediating ubiquitination and subsequent degradation of substrate proteins. Probably mediates 'Lys-48'-linked ubiquitination. This is Kelch-like protein 7 (KLHL7) from Homo sapiens (Human).